The following is a 66-amino-acid chain: MAKGKDVRAIVILECTSCVRNGVNKESPGISRYITQRNRHNTPNRLELRKFCPYCYKHTIHGEIKK.

The protein belongs to the bacterial ribosomal protein bL33 family.

Its subcellular location is the plastid. The protein resides in the chloroplast. The chain is Large ribosomal subunit protein bL33c from Chloranthus spicatus (Chulantree).